We begin with the raw amino-acid sequence, 159 residues long: Small heat shock protein hspM (159 aa).

Residues 1–159 enclose the sHSP domain; that stretch reads MFVLNFELAG…LSNNIKIQIN (159 aa). The disordered stretch occupies residues 35–101; the sequence is MNNNNKNNLQ…NNNNKSSKTN (67 aa). 2 stretches are compositionally biased toward low complexity: residues 36-46 and 61-95; these read NNNNKNNLQIN and SSSSNNNNNNNNNNNNNNNNNNNNNNNNNSNNNNN.

The protein belongs to the small heat shock protein (HSP20) family.

The polypeptide is Small heat shock protein hspM (hspM) (Dictyostelium discoideum (Social amoeba)).